The chain runs to 546 residues: CTP synthase (546 aa).

The amidoligase domain stretch occupies residues 1–269; sequence MNSNTKIIFV…DAKLVELLNL (269 aa). Position 16 (Ser16) interacts with CTP. Ser16 lines the UTP pocket. ATP-binding positions include 17 to 22 and Asp74; that span reads SLGKGV. Asp74 and Glu143 together coordinate Mg(2+). Residues 150–152, 190–195, and Lys226 each bind CTP; these read DIE and KTKPTQ. UTP contacts are provided by residues 190–195 and Lys226; that span reads KTKPTQ. Positions 294 to 546 constitute a Glutamine amidotransferase type-1 domain; sequence TIAMVGKYVS…IQAAIENSNN (253 aa). Residue Gly356 participates in L-glutamine binding. Cys383 (nucleophile; for glutamine hydrolysis) is an active-site residue. L-glutamine contacts are provided by residues 384–387, Glu407, and Arg474; that span reads LGMQ. Active-site residues include His519 and Glu521.

This sequence belongs to the CTP synthase family. As to quaternary structure, homotetramer.

It catalyses the reaction UTP + L-glutamine + ATP + H2O = CTP + L-glutamate + ADP + phosphate + 2 H(+). The catalysed reaction is L-glutamine + H2O = L-glutamate + NH4(+). The enzyme catalyses UTP + NH4(+) + ATP = CTP + ADP + phosphate + 2 H(+). The protein operates within pyrimidine metabolism; CTP biosynthesis via de novo pathway; CTP from UDP: step 2/2. Its activity is regulated as follows. Allosterically activated by GTP, when glutamine is the substrate; GTP has no effect on the reaction when ammonia is the substrate. The allosteric effector GTP functions by stabilizing the protein conformation that binds the tetrahedral intermediate(s) formed during glutamine hydrolysis. Inhibited by the product CTP, via allosteric rather than competitive inhibition. In terms of biological role, catalyzes the ATP-dependent amination of UTP to CTP with either L-glutamine or ammonia as the source of nitrogen. Regulates intracellular CTP levels through interactions with the four ribonucleotide triphosphates. This Francisella tularensis subsp. mediasiatica (strain FSC147) protein is CTP synthase.